Consider the following 38-residue polypeptide: Potassium channel toxin alpha-KTx 3.11 (38 aa).

3 cysteine pairs are disulfide-bonded: Cys-8–Cys-28, Cys-14–Cys-33, and Cys-18–Cys-35.

The protein belongs to the short scorpion toxin superfamily. Potassium channel inhibitor family. Alpha-KTx 03 subfamily. Expressed by the venom gland.

It is found in the secreted. In terms of biological role, blocks the voltage-gated potassium channel Kv1.3/KCNA3 (IC(50)=7.2 nM). Correnti and colleagues have also shown that this toxin inhibits Kv1.1/KCNA1, which is different from Abdel-Mottaleb and colleagues conclusions. The chain is Potassium channel toxin alpha-KTx 3.11 from Odontobuthus doriae (Yellow Iranian scorpion).